The primary structure comprises 486 residues: Galactose-1-phosphate uridylyltransferase (486 aa).

The protein belongs to the galactose-1-phosphate uridylyltransferase type 2 family.

The protein resides in the cytoplasm. The catalysed reaction is alpha-D-galactose 1-phosphate + UDP-alpha-D-glucose = alpha-D-glucose 1-phosphate + UDP-alpha-D-galactose. Its pathway is carbohydrate metabolism; galactose metabolism. In Lacticaseibacillus casei (Lactobacillus casei), this protein is Galactose-1-phosphate uridylyltransferase.